A 355-amino-acid chain; its full sequence is N-acetyl-gamma-glutamyl-phosphate reductase (355 aa).

Cysteine 152 is a catalytic residue.

This sequence belongs to the NAGSA dehydrogenase family. Type 1 subfamily.

The protein resides in the cytoplasm. The catalysed reaction is N-acetyl-L-glutamate 5-semialdehyde + phosphate + NADP(+) = N-acetyl-L-glutamyl 5-phosphate + NADPH + H(+). The protein operates within amino-acid biosynthesis; L-arginine biosynthesis; N(2)-acetyl-L-ornithine from L-glutamate: step 3/4. Catalyzes the NADPH-dependent reduction of N-acetyl-5-glutamyl phosphate to yield N-acetyl-L-glutamate 5-semialdehyde. The sequence is that of N-acetyl-gamma-glutamyl-phosphate reductase from Psychrobacter arcticus (strain DSM 17307 / VKM B-2377 / 273-4).